Reading from the N-terminus, the 176-residue chain is Siroheme decarboxylase alpha subunit (176 aa).

A disordered region spans residues M1–A24. The segment covering S12–A24 has biased composition (low complexity).

It belongs to the Ahb/Nir family. In terms of assembly, forms a heterodimer composed of AhbA and AhbB. Also forms heterotetramers.

It carries out the reaction siroheme + 2 H(+) = 12,18-didecarboxysiroheme + 2 CO2. It participates in porphyrin-containing compound metabolism; protoheme biosynthesis. Its function is as follows. Involved in siroheme-dependent heme b biosynthesis. Catalyzes the decarboxylation of siroheme into didecarboxysiroheme. In Nitratidesulfovibrio vulgaris (strain ATCC 29579 / DSM 644 / CCUG 34227 / NCIMB 8303 / VKM B-1760 / Hildenborough) (Desulfovibrio vulgaris), this protein is Siroheme decarboxylase alpha subunit.